The chain runs to 224 residues: Ribose-5-phosphate isomerase A 1 (224 aa).

Residues 29-32 (SGST), 85-88 (DGAD), and 98-101 (KGGG) each bind substrate. Catalysis depends on Glu107, which acts as the Proton acceptor. Position 125 (Lys125) interacts with substrate.

It belongs to the ribose 5-phosphate isomerase family. In terms of assembly, homodimer.

The catalysed reaction is aldehydo-D-ribose 5-phosphate = D-ribulose 5-phosphate. The protein operates within carbohydrate degradation; pentose phosphate pathway; D-ribose 5-phosphate from D-ribulose 5-phosphate (non-oxidative stage): step 1/1. Its function is as follows. Catalyzes the reversible conversion of ribose-5-phosphate to ribulose 5-phosphate. The protein is Ribose-5-phosphate isomerase A 1 of Oceanobacillus iheyensis (strain DSM 14371 / CIP 107618 / JCM 11309 / KCTC 3954 / HTE831).